The following is a 345-amino-acid chain: MSASCGPLGTSLTQEILSSLGLADKTAAWGTLGTLRTFLSFSVDKDVQRLLKAIAGQGVDYDTIVDVLTNRSREQRQLISRAFQERTKQDLLKSLQAALSGNLEKIVVALLQPAAQFDAQELRTALKTSGSAEDVALEILATRAAPGLQACLAVYKHDFQVEAEEDIRTETNGILQDLLLALSKGDRESYSGIIDYNLEEQDVRALQQAGESSTAGQWVLLLTQRSPEHLIRVFDQYRRCTGQELEDAIRNCFHGDAQLALISLASMLRNTALYFANKLHQALQETEPNFQVLTRVLISRSESDLLSIRAEFKKKFGKSLYSSLQDVVRGDCRSALLALCRAEDI.

Annexin repeat units lie at residues Phe-41–Gln-112, Pro-113–Lys-184, Asn-197–Ser-266, and Asn-270–Arg-341.

Belongs to the annexin family. Homodimer.

Its function is as follows. May act as a low affinity receptor for acetylcholine. The sequence is that of Annexin A9 (Anxa9) from Mus musculus (Mouse).